A 237-amino-acid polypeptide reads, in one-letter code: DNA repair protein RecO (237 aa).

Belongs to the RecO family.

In terms of biological role, involved in DNA repair and RecF pathway recombination. This chain is DNA repair protein RecO, found in Rickettsia peacockii (strain Rustic).